The chain runs to 140 residues: Sex-regulated protein janus-B (140 aa).

Arginine 42 serves as a coordination point for substrate. Residue histidine 69 is the Proton acceptor of the active site. 110–112 (SRT) serves as a coordination point for substrate.

The protein belongs to the janus family.

In terms of biological role, janA and janB regulate somatic sex differentiation. This chain is Sex-regulated protein janus-B (janB), found in Drosophila teissieri (Fruit fly).